A 492-amino-acid polypeptide reads, in one-letter code: Aspartyl/glutamyl-tRNA(Asn/Gln) amidotransferase subunit B (492 aa).

It belongs to the GatB/GatE family. GatB subfamily. Heterotrimer of A, B and C subunits.

It carries out the reaction L-glutamyl-tRNA(Gln) + L-glutamine + ATP + H2O = L-glutaminyl-tRNA(Gln) + L-glutamate + ADP + phosphate + H(+). The enzyme catalyses L-aspartyl-tRNA(Asn) + L-glutamine + ATP + H2O = L-asparaginyl-tRNA(Asn) + L-glutamate + ADP + phosphate + 2 H(+). Its function is as follows. Allows the formation of correctly charged Asn-tRNA(Asn) or Gln-tRNA(Gln) through the transamidation of misacylated Asp-tRNA(Asn) or Glu-tRNA(Gln) in organisms which lack either or both of asparaginyl-tRNA or glutaminyl-tRNA synthetases. The reaction takes place in the presence of glutamine and ATP through an activated phospho-Asp-tRNA(Asn) or phospho-Glu-tRNA(Gln). This Bradyrhizobium sp. (strain BTAi1 / ATCC BAA-1182) protein is Aspartyl/glutamyl-tRNA(Asn/Gln) amidotransferase subunit B.